A 391-amino-acid chain; its full sequence is Succinate--CoA ligase [ADP-forming] subunit beta (391 aa).

The 240-residue stretch at 9 to 248 folds into the ATP-grasp domain; sequence KDILRKFGVA…ITEEDPFEVE (240 aa). Residues K50, 57 to 59, E103, M106, and E111 each bind ATP; that span reads GRG. N203 and D217 together coordinate Mg(2+). Residues N268 and 325–327 contribute to the substrate site; that span reads GIV.

The protein belongs to the succinate/malate CoA ligase beta subunit family. As to quaternary structure, heterotetramer of two alpha and two beta subunits. Mg(2+) is required as a cofactor.

It carries out the reaction succinate + ATP + CoA = succinyl-CoA + ADP + phosphate. The enzyme catalyses GTP + succinate + CoA = succinyl-CoA + GDP + phosphate. It functions in the pathway carbohydrate metabolism; tricarboxylic acid cycle; succinate from succinyl-CoA (ligase route): step 1/1. In terms of biological role, succinyl-CoA synthetase functions in the citric acid cycle (TCA), coupling the hydrolysis of succinyl-CoA to the synthesis of either ATP or GTP and thus represents the only step of substrate-level phosphorylation in the TCA. The beta subunit provides nucleotide specificity of the enzyme and binds the substrate succinate, while the binding sites for coenzyme A and phosphate are found in the alpha subunit. The protein is Succinate--CoA ligase [ADP-forming] subunit beta of Chlorobium phaeovibrioides (strain DSM 265 / 1930) (Prosthecochloris vibrioformis (strain DSM 265)).